A 444-amino-acid chain; its full sequence is ATP-dependent protease ATPase subunit HslU (444 aa).

Residues I18, 60–65 (GVGKTE), D256, E322, and R394 each bind ATP.

Belongs to the ClpX chaperone family. HslU subfamily. A double ring-shaped homohexamer of HslV is capped on each side by a ring-shaped HslU homohexamer. The assembly of the HslU/HslV complex is dependent on binding of ATP.

The protein localises to the cytoplasm. In terms of biological role, ATPase subunit of a proteasome-like degradation complex; this subunit has chaperone activity. The binding of ATP and its subsequent hydrolysis by HslU are essential for unfolding of protein substrates subsequently hydrolyzed by HslV. HslU recognizes the N-terminal part of its protein substrates and unfolds these before they are guided to HslV for hydrolysis. The protein is ATP-dependent protease ATPase subunit HslU of Klebsiella pneumoniae (strain 342).